A 482-amino-acid polypeptide reads, in one-letter code: UDP-N-acetylmuramoyl-L-alanyl-D-glutamate--2,6-diaminopimelate ligase (482 aa).

Ser29 serves as a coordination point for UDP-N-acetyl-alpha-D-muramoyl-L-alanyl-D-glutamate. 109-115 contributes to the ATP binding site; the sequence is GTNGKTS. UDP-N-acetyl-alpha-D-muramoyl-L-alanyl-D-glutamate is bound by residues 151 to 152, Ser178, and Arg186; that span reads TT. Lys218 is subject to N6-carboxylysine. Residues Arg375, 399–402, Gly451, and Glu455 each bind meso-2,6-diaminopimelate; that span reads DNPR. Positions 399-402 match the Meso-diaminopimelate recognition motif motif; it reads DNPR.

The protein belongs to the MurCDEF family. MurE subfamily. The cofactor is Mg(2+). In terms of processing, carboxylation is probably crucial for Mg(2+) binding and, consequently, for the gamma-phosphate positioning of ATP.

It is found in the cytoplasm. The enzyme catalyses UDP-N-acetyl-alpha-D-muramoyl-L-alanyl-D-glutamate + meso-2,6-diaminopimelate + ATP = UDP-N-acetyl-alpha-D-muramoyl-L-alanyl-gamma-D-glutamyl-meso-2,6-diaminopimelate + ADP + phosphate + H(+). Its pathway is cell wall biogenesis; peptidoglycan biosynthesis. Catalyzes the addition of meso-diaminopimelic acid to the nucleotide precursor UDP-N-acetylmuramoyl-L-alanyl-D-glutamate (UMAG) in the biosynthesis of bacterial cell-wall peptidoglycan. In Caldanaerobacter subterraneus subsp. tengcongensis (strain DSM 15242 / JCM 11007 / NBRC 100824 / MB4) (Thermoanaerobacter tengcongensis), this protein is UDP-N-acetylmuramoyl-L-alanyl-D-glutamate--2,6-diaminopimelate ligase.